A 114-amino-acid chain; its full sequence is Protein ORF3 (114 aa).

2 hydrophobic regions span residues C6–C22 and A33–L53. Residues V28–P68 form an interaction with host HPX region. Residues V48–P72 are interaction with the capsid protein. A Phosphoserine; by host modification is found at S71. The segment at P72–R114 is homodimerization, and interaction with host AMBP/bikunin. Positions L91–R114 are disordered. The segment at R95–V104 is interaction with host SRC, HCK, FYN, PIK3R3 and GRB2. The short motif at P96–P99 is the PTAP/PSAP motif element.

Belongs to the hepevirus ORF3 protein family. Forms homooligomers. Interacts with host SRC, HCK, FYN, PIK3R3 and GRB2 (via SH3 domain); binding does not activate the kinases. Interacts with host AMBP/bikunin and AMBP/alpha-1-microglobulin peptides. Interacts with host HPX/hemopexin. Interacts (when phosphorylated) with capsid protein ORF2. Interacts with host TSG101; this interaction plays a role in viral release from the host cell. Interacts with host SIRPA; this interaction down-regulates the phosphorylation of host IRF3. Post-translationally, palmitoylated in the N-terminus.

The protein resides in the host endoplasmic reticulum membrane. It is found in the host cytoplasm. It localises to the host cytoskeleton. Its subcellular location is the virion. The protein localises to the host cell membrane. Small multifunctional phosphoprotein involved in virion morphogenesis, egress and counteracting host innate immunity. Plays critical roles in the final steps of viral release by interacting with host TSG101, a member of the vacuolar protein-sorting pathway and using other cellular host proteins involved in vesicle formation pathway. Also acts as a viroporin and forms ion conductive pores allowing viral particle release. Impairs the generation of type I interferon by down-regulating host TLR3 and TLR7 as well as their downstream signaling pathways. Down-regulates the phosphorylation of host IRF3 via the interaction with host SIRP-alpha, thereby inhibiting IFN-I expression. Interacts with host microtubules. The chain is Protein ORF3 from Homo sapiens (Human).